Here is a 177-residue protein sequence, read N- to C-terminus: Probable chemoreceptor glutamine deamidase CheD (177 aa).

The protein belongs to the CheD family.

The enzyme catalyses L-glutaminyl-[protein] + H2O = L-glutamyl-[protein] + NH4(+). In terms of biological role, probably deamidates glutamine residues to glutamate on methyl-accepting chemotaxis receptors (MCPs), playing an important role in chemotaxis. This is Probable chemoreceptor glutamine deamidase CheD from Pseudomonas fluorescens (strain SBW25).